The chain runs to 129 residues: Glycine cleavage system H protein (129 aa).

The Lipoyl-binding domain maps to 23–104 (TVTVGITQHA…SYSAWLFKLK (82 aa)). At K64 the chain carries N6-lipoyllysine.

Belongs to the GcvH family. In terms of assembly, the glycine cleavage system is composed of four proteins: P, T, L and H. Requires (R)-lipoate as cofactor.

In terms of biological role, the glycine cleavage system catalyzes the degradation of glycine. The H protein shuttles the methylamine group of glycine from the P protein to the T protein. The sequence is that of Glycine cleavage system H protein from Nitrosomonas eutropha (strain DSM 101675 / C91 / Nm57).